A 238-amino-acid polypeptide reads, in one-letter code: 1-(5-phosphoribosyl)-5-[(5-phosphoribosylamino)methylideneamino] imidazole-4-carboxamide isomerase (238 aa).

D8 functions as the Proton acceptor in the catalytic mechanism. The active-site Proton donor is D130.

The protein belongs to the HisA/HisF family.

The protein resides in the cytoplasm. It carries out the reaction 1-(5-phospho-beta-D-ribosyl)-5-[(5-phospho-beta-D-ribosylamino)methylideneamino]imidazole-4-carboxamide = 5-[(5-phospho-1-deoxy-D-ribulos-1-ylimino)methylamino]-1-(5-phospho-beta-D-ribosyl)imidazole-4-carboxamide. The protein operates within amino-acid biosynthesis; L-histidine biosynthesis; L-histidine from 5-phospho-alpha-D-ribose 1-diphosphate: step 4/9. This chain is 1-(5-phosphoribosyl)-5-[(5-phosphoribosylamino)methylideneamino] imidazole-4-carboxamide isomerase, found in Methanococcus maripaludis (strain C5 / ATCC BAA-1333).